A 316-amino-acid chain; its full sequence is Protein FLUORESCENT IN BLUE LIGHT, chloroplastic (316 aa).

A chloroplast-targeting transit peptide spans 1–26 (MAALIRCCSSFSHTSGGQPPPRDKSR). A helical transmembrane segment spans residues 125–145 (MFSMPILLLVALIGATVGGLL). Residues 144–175 (LLARQRKGELQRLNEQLRQINAALRRQAKIES) are a coiled coil. TPR repeat units lie at residues 203 to 236 (LISKLKTGKTFLRNQEPEKAYTEFKIALELAQSL), 243 to 276 (KKAARGLGASLQRQGKYREAIQYHSMVLAISKRE), and 283 to 316 (TEAYGAIADCYTELGDLEKAGKFYDTYIARLETD).

In terms of assembly, part of the FLU-containing chloroplast membrane complex composed of FLU, CRD1, PORB, PORC, CHLP and HEMA1. Interacts with HEMA1 (via C-terminus) only in the absence of light. No interaction with HEMA2.

The protein resides in the plastid. It is found in the chloroplast membrane. The protein localises to the chloroplast thylakoid membrane. Functionally, negative regulator of tetrapyrrole biosynthesis (including chlorophyll) in chloroplasts, probably via HEMA1 repression. Inhibits especially the magnesium ion Mg(2+) branch of tetrapyrrole biosynthesis, but independently of heme. This Arabidopsis thaliana (Mouse-ear cress) protein is Protein FLUORESCENT IN BLUE LIGHT, chloroplastic (FLU).